Reading from the N-terminus, the 434-residue chain is Protein FAM83A (434 aa).

The DUF1669 stretch occupies residues 1–298 (MSRSRHLGKI…LYASSKPVMG (298 aa)). The disordered stretch occupies residues 76-97 (REPPCPPDTLGGAEAGPKGLDS). Ser-301, Ser-327, Ser-348, and Ser-357 each carry phosphoserine. The interval 308-399 (VPPGAAPANG…HDGPPAAVYS (92 aa)) is disordered. Composition is skewed to low complexity over residues 320–332 (SSSS…RTSS) and 348–357 (SVSASSGPCS). Pro residues predominate over residues 358 to 369 (PAAPHPPPPPRF).

This sequence belongs to the FAM83 family. As to quaternary structure, directly interacts (via DUF1669) with casein kinase isoforms CSNK1A1, CSNK1A1L, CSNK1D and CSNK1E. Phosphorylated upon EGFR activation in a breast cancer cell line.

It is found in the cytoplasm. Involved in mitochondrial maintenance during adipogenesis. May be acting by playing a role in the maintenance of normal mitochondrial function. This is Protein FAM83A from Homo sapiens (Human).